The primary structure comprises 104 residues: Large ribosomal subunit protein bL21 (104 aa).

It belongs to the bacterial ribosomal protein bL21 family. As to quaternary structure, part of the 50S ribosomal subunit. Contacts protein L20.

This protein binds to 23S rRNA in the presence of protein L20. This chain is Large ribosomal subunit protein bL21, found in Helicobacter pylori (strain G27).